Here is a 372-residue protein sequence, read N- to C-terminus: Alanine dehydrogenase 2 (372 aa).

The active site involves His95. 169-199 (KVTIIGGGQAGTNAAKIALGLGADVTILDVN) contacts NAD(+).

This sequence belongs to the AlaDH/PNT family.

The enzyme catalyses L-alanine + NAD(+) + H2O = pyruvate + NH4(+) + NADH + H(+). The protein operates within amino-acid degradation; L-alanine degradation via dehydrogenase pathway; NH(3) and pyruvate from L-alanine: step 1/1. In terms of biological role, may play a role in cell wall synthesis as L-alanine is an important constituent of the peptidoglycan layer. The sequence is that of Alanine dehydrogenase 2 (ald2) from Staphylococcus aureus (strain COL).